The chain runs to 129 residues: Small ribosomal subunit protein uS9 (129 aa).

It belongs to the universal ribosomal protein uS9 family.

The polypeptide is Small ribosomal subunit protein uS9 (Chlorobium phaeobacteroides (strain DSM 266 / SMG 266 / 2430)).